The chain runs to 159 residues: Ribosomal RNA large subunit methyltransferase H (159 aa).

S-adenosyl-L-methionine contacts are provided by residues Leu-76, Gly-108, and 127-132 (FGLLTL).

The protein belongs to the RNA methyltransferase RlmH family. In terms of assembly, homodimer.

It localises to the cytoplasm. The catalysed reaction is pseudouridine(1915) in 23S rRNA + S-adenosyl-L-methionine = N(3)-methylpseudouridine(1915) in 23S rRNA + S-adenosyl-L-homocysteine + H(+). Its function is as follows. Specifically methylates the pseudouridine at position 1915 (m3Psi1915) in 23S rRNA. This chain is Ribosomal RNA large subunit methyltransferase H, found in Streptococcus pyogenes serotype M6 (strain ATCC BAA-946 / MGAS10394).